A 266-amino-acid polypeptide reads, in one-letter code: Arcelin-4 (266 aa).

Positions 1-21 (MGSSKLLSLALLLVLLTHANS) are cleaved as a signal peptide. Asn-28 and Asn-92 each carry an N-linked (GlcNAc...) asparagine glycan.

This sequence belongs to the leguminous lectin family.

Functionally, seed storage. This carbohydrate-binding lectin has toxic effects on the important bean bruchid pests, Z.subfasciatus and A.obtectus. The protein is Arcelin-4 (ARC4) of Phaseolus vulgaris (Kidney bean).